The primary structure comprises 187 residues: Lipoprotein signal peptidase (187 aa).

Helical transmembrane passes span 12–32 (VAVF…TKMW), 68–88 (MTWL…VLAV), and 91–111 (ISMK…GNLI). Catalysis depends on residues Asp-127 and Asp-140. A helical transmembrane segment spans residues 141-161 (IFLMLAGVAAVLLLFLGEPFS). Positions 167 to 187 (EANGKTLGDDANATDDGAKAA) are disordered.

This sequence belongs to the peptidase A8 family.

The protein resides in the cell membrane. The enzyme catalyses Release of signal peptides from bacterial membrane prolipoproteins. Hydrolyzes -Xaa-Yaa-Zaa-|-(S,diacylglyceryl)Cys-, in which Xaa is hydrophobic (preferably Leu), and Yaa (Ala or Ser) and Zaa (Gly or Ala) have small, neutral side chains.. Its pathway is protein modification; lipoprotein biosynthesis (signal peptide cleavage). This protein specifically catalyzes the removal of signal peptides from prolipoproteins. This chain is Lipoprotein signal peptidase, found in Bifidobacterium adolescentis (strain ATCC 15703 / DSM 20083 / NCTC 11814 / E194a).